A 504-amino-acid chain; its full sequence is Glucose-6-phosphate isomerase (504 aa).

The active-site Proton donor is the Glu-333. Catalysis depends on residues His-364 and Lys-473.

This sequence belongs to the GPI family.

It localises to the cytoplasm. The catalysed reaction is alpha-D-glucose 6-phosphate = beta-D-fructose 6-phosphate. It functions in the pathway carbohydrate biosynthesis; gluconeogenesis. The protein operates within carbohydrate degradation; glycolysis; D-glyceraldehyde 3-phosphate and glycerone phosphate from D-glucose: step 2/4. In terms of biological role, catalyzes the reversible isomerization of glucose-6-phosphate to fructose-6-phosphate. This Xanthomonas oryzae pv. oryzae (strain KACC10331 / KXO85) protein is Glucose-6-phosphate isomerase.